Consider the following 179-residue polypeptide: MESRKEKRAFLIGRFQPFHKGHLEIVKRILSENDSIIIGIGSAQYSHTVVNPFTAGERHLMISRTLEKERIYNYYLVPIEDVNANSLWVSHVEALTPKFDIVYTNNPLVRRLFMERKYEVRSLPMVNRKEWTGTKIREKMIAGEPWENDVPDPVVEVIHEIDGISRIRQLSTTDEDITQ.

It belongs to the archaeal NMN adenylyltransferase family.

The protein resides in the cytoplasm. It carries out the reaction beta-nicotinamide D-ribonucleotide + ATP + H(+) = diphosphate + NAD(+). Its pathway is cofactor biosynthesis; NAD(+) biosynthesis; NAD(+) from nicotinamide D-ribonucleotide: step 1/1. In Thermoplasma acidophilum (strain ATCC 25905 / DSM 1728 / JCM 9062 / NBRC 15155 / AMRC-C165), this protein is Nicotinamide-nucleotide adenylyltransferase.